The chain runs to 345 residues: Chorismate synthase (345 aa).

It belongs to the chorismate synthase family. In terms of assembly, homotetramer. FMNH2 is required as a cofactor.

It carries out the reaction 5-O-(1-carboxyvinyl)-3-phosphoshikimate = chorismate + phosphate. It participates in metabolic intermediate biosynthesis; chorismate biosynthesis; chorismate from D-erythrose 4-phosphate and phosphoenolpyruvate: step 7/7. This is Chorismate synthase (aroC) from Carsonella ruddii (strain PV).